Here is a 287-residue protein sequence, read N- to C-terminus: Shikimate kinase 3, chloroplastic (287 aa).

The transit peptide at 1-57 (MDAGVGLRAKPGAWAGLGNPRRSSTARVPVRFAVEKFAQPLVLGSDRRSCGAKLKVS) directs the protein to the chloroplast. 98–105 (GMMGSGKT) contacts ATP. A Mg(2+)-binding site is contributed by Thr-105. 3 residues coordinate substrate: Asp-123, Arg-148, and Gly-170. Residue Arg-209 participates in ATP binding.

Belongs to the shikimate kinase family. The cofactor is Mg(2+). As to expression, expressed in panicles.

The protein localises to the plastid. It is found in the chloroplast. The catalysed reaction is shikimate + ATP = 3-phosphoshikimate + ADP + H(+). It functions in the pathway metabolic intermediate biosynthesis; chorismate biosynthesis; chorismate from D-erythrose 4-phosphate and phosphoenolpyruvate: step 5/7. Functionally, catalyzes the specific phosphorylation of the 3-hydroxyl group of shikimic acid using ATP as a cosubstrate. This is Shikimate kinase 3, chloroplastic (SK3) from Oryza sativa subsp. japonica (Rice).